A 164-amino-acid polypeptide reads, in one-letter code: Endoribonuclease YbeY (164 aa).

3 residues coordinate Zn(2+): His-111, His-115, and His-121. The interval 142–164 (GYPDPYADDETETSPTVTTKDSE) is disordered. Residues 154–164 (TSPTVTTKDSE) show a composition bias toward polar residues.

This sequence belongs to the endoribonuclease YbeY family. Zn(2+) serves as cofactor.

It is found in the cytoplasm. Single strand-specific metallo-endoribonuclease involved in late-stage 70S ribosome quality control and in maturation of the 3' terminus of the 16S rRNA. This chain is Endoribonuclease YbeY, found in Pseudomonas fluorescens (strain Pf0-1).